Reading from the N-terminus, the 124-residue chain is Glycine cleavage system H protein (124 aa).

Residues 19–101 form the Lipoyl-binding domain; that stretch reads VATVGITNHA…EGEGWLFKME (83 aa). Residue Lys-60 is modified to N6-lipoyllysine.

This sequence belongs to the GcvH family. In terms of assembly, the glycine cleavage system is composed of four proteins: P, T, L and H. Requires (R)-lipoate as cofactor.

Its function is as follows. The glycine cleavage system catalyzes the degradation of glycine. The H protein shuttles the methylamine group of glycine from the P protein to the T protein. The protein is Glycine cleavage system H protein of Thermotoga maritima (strain ATCC 43589 / DSM 3109 / JCM 10099 / NBRC 100826 / MSB8).